The chain runs to 1252 residues: DNA-directed RNA polymerase subunit beta (1252 aa).

Belongs to the RNA polymerase beta chain family. As to quaternary structure, the RNAP catalytic core consists of 2 alpha, 1 beta, 1 beta' and 1 omega subunit. When a sigma factor is associated with the core the holoenzyme is formed, which can initiate transcription.

It carries out the reaction RNA(n) + a ribonucleoside 5'-triphosphate = RNA(n+1) + diphosphate. Its function is as follows. DNA-dependent RNA polymerase catalyzes the transcription of DNA into RNA using the four ribonucleoside triphosphates as substrates. This is DNA-directed RNA polymerase subunit beta from Chlamydia abortus (strain DSM 27085 / S26/3) (Chlamydophila abortus).